The primary structure comprises 378 residues: Protein arginine N-methyltransferase 6 (378 aa).

Residues 1-46 (MSLSKKRKLESGDSGGAGAGGEGAEEENGGEQEAAPPRPRRTKSER) form a disordered region. Residues 13-22 (DSGGAGAGGE) are compositionally biased toward gly residues. R38 bears the Asymmetric dimethylarginine; by autocatalysis mark. The SAM-dependent MTase PRMT-type domain maps to 47-377 (DQLYYECYSD…EEKTKDFAME (331 aa)). Positions 60, 69, 93, 115, and 144 each coordinate S-adenosyl-L-methionine. Active-site residues include E158 and E167.

It belongs to the class I-like SAM-binding methyltransferase superfamily. Protein arginine N-methyltransferase family. PRMT6 subfamily. As to quaternary structure, interacts with (and methylates) HIV-1 Tat, Rev and Nucleocapsid protein p7 (NC). Interacts with EPB41L3 and NCOA1. Post-translationally, automethylation enhances its stability.

The protein localises to the nucleus. The catalysed reaction is L-arginyl-[protein] + 2 S-adenosyl-L-methionine = N(omega),N(omega)-dimethyl-L-arginyl-[protein] + 2 S-adenosyl-L-homocysteine + 2 H(+). In terms of biological role, arginine methyltransferase that can catalyze the formation of both omega-N monomethylarginine (MMA) and asymmetrical dimethylarginine (aDMA), with a strong preference for the formation of aDMA. Preferentially methylates arginyl residues present in a glycine and arginine-rich domain and displays preference for monomethylated substrates. Specifically mediates the asymmetric dimethylation of histone H3 'Arg-2' to form H3R2me2a. H3R2me2a represents a specific tag for epigenetic transcriptional repression and is mutually exclusive with methylation on histone H3 'Lys-4' (H3K4me2 and H3K4me3). Acts as a transcriptional repressor of various genes such as HOXA2, THBS1 and TP53. Repression of TP53 blocks cellular senescence. Also methylates histone H2A and H4 'Arg-3' (H2AR3me and H4R3me, respectively). Acts as a regulator of DNA base excision during DNA repair by mediating the methylation of DNA polymerase beta (POLB), leading to the stimulation of its polymerase activity by enhancing DNA binding and processivity. Methylates HMGA1. Regulates alternative splicing events. Acts as a transcriptional coactivator of a number of steroid hormone receptors including ESR1, ESR2, PGR and NR3C1. Promotes fasting-induced transcriptional activation of the gluconeogenic program through methylation of the CRTC2 transcription coactivator. Methylates GPS2, protecting GPS2 from ubiquitination and degradation. Methylates SIRT7, inhibiting SIRT7 histone deacetylase activity and promoting mitochondria biogenesis. In Mus musculus (Mouse), this protein is Protein arginine N-methyltransferase 6 (Prmt6).